A 423-amino-acid chain; its full sequence is UDP-N-acetylglucosamine 1-carboxyvinyltransferase 1 (423 aa).

24–25 serves as a coordination point for phosphoenolpyruvate; sequence KN. R94 lines the UDP-N-acetyl-alpha-D-glucosamine pocket. Residue C118 is the Proton donor of the active site. C118 bears the 2-(S-cysteinyl)pyruvic acid O-phosphothioketal mark. Residues 123-127, D309, and I331 contribute to the UDP-N-acetyl-alpha-D-glucosamine site; that span reads RPIDQ.

It belongs to the EPSP synthase family. MurA subfamily.

It is found in the cytoplasm. It catalyses the reaction phosphoenolpyruvate + UDP-N-acetyl-alpha-D-glucosamine = UDP-N-acetyl-3-O-(1-carboxyvinyl)-alpha-D-glucosamine + phosphate. Its pathway is cell wall biogenesis; peptidoglycan biosynthesis. In terms of biological role, cell wall formation. Adds enolpyruvyl to UDP-N-acetylglucosamine. The protein is UDP-N-acetylglucosamine 1-carboxyvinyltransferase 1 of Staphylococcus haemolyticus (strain JCSC1435).